A 284-amino-acid polypeptide reads, in one-letter code: Bifunctional protein FolD (284 aa).

166-168 (GAS) contacts NADP(+).

It belongs to the tetrahydrofolate dehydrogenase/cyclohydrolase family. In terms of assembly, homodimer.

It carries out the reaction (6R)-5,10-methylene-5,6,7,8-tetrahydrofolate + NADP(+) = (6R)-5,10-methenyltetrahydrofolate + NADPH. It catalyses the reaction (6R)-5,10-methenyltetrahydrofolate + H2O = (6R)-10-formyltetrahydrofolate + H(+). The protein operates within one-carbon metabolism; tetrahydrofolate interconversion. Functionally, catalyzes the oxidation of 5,10-methylenetetrahydrofolate to 5,10-methenyltetrahydrofolate and then the hydrolysis of 5,10-methenyltetrahydrofolate to 10-formyltetrahydrofolate. This is Bifunctional protein FolD from Legionella pneumophila (strain Paris).